The chain runs to 180 residues: uncharacterized protein (180 aa).

A Nudix hydrolase domain is found at 35-163 (LRHRATYIVV…TPDSLKALAL (129 aa)). The Nudix box motif lies at 72–94 (GGVVQADEQLLESARREAEEELG). 2 residues coordinate Mg(2+): Glu-88 and Glu-92.

This sequence belongs to the Nudix hydrolase family. Mg(2+) is required as a cofactor.

This is an uncharacterized protein from Escherichia coli O157:H7.